The following is a 563-amino-acid chain: Cytidine monophosphate-N-acetylneuraminic acid hydroxylase (563 aa).

Positions leucine 10–phenylalanine 108 constitute a Rieske domain. [2Fe-2S] cluster contacts are provided by cysteine 50, histidine 52, cysteine 71, and histidine 74.

The protein belongs to the CMP-Neu5Ac hydroxylase family. [2Fe-2S] cluster is required as a cofactor.

It localises to the cytoplasm. The catalysed reaction is CMP-N-acetyl-beta-neuraminate + 2 Fe(II)-[cytochrome b5] + O2 + 2 H(+) = CMP-N-glycoloyl-beta-neuraminate + 2 Fe(III)-[cytochrome b5] + H2O. Its pathway is amino-sugar metabolism; N-acetylneuraminate metabolism. Sialic acids are components of carbohydrate chains of glycoconjugates and are involved in cell-cell recognition and cell-pathogen interactions. Catalyzes the conversion of CMP-N-acetylneuraminic acid (CMP-Neu5Ac) into its hydroxylated derivative CMP-N-glycolylneuraminic acid (CMP-Neu5Gc), a sialic acid abundantly expressed at the surface of many cells. In Cricetulus griseus (Chinese hamster), this protein is Cytidine monophosphate-N-acetylneuraminic acid hydroxylase (CMAH).